A 391-amino-acid chain; its full sequence is Cyclin-B1-2 (391 aa).

Belongs to the cyclin family. Cyclin AB subfamily.

This Oryza sativa subsp. japonica (Rice) protein is Cyclin-B1-2 (CYCB1-2).